Reading from the N-terminus, the 856-residue chain is Protein phosphatase 2C 32 (856 aa).

Phosphoserine is present on residues S152, S189, and S201. One can recognise a PPM-type phosphatase domain in the interval 269–835 (ESCLESNRNL…DDVSVMVVSL (567 aa)). The Mn(2+) site is built by D307 and G308. 3 disordered regions span residues 340–373 (PSED…KSVV), 388–407 (GNTD…GPGK), and 446–485 (NPST…QISS). A compositionally biased stretch (low complexity) spans 395-407 (ADGPPGDSAGPGK). Polar residues predominate over residues 471–485 (NSGQRHGTKKSQISS). Residues D763 and D826 each contribute to the Mn(2+) site.

Belongs to the PP2C family. The cofactor is Mg(2+). Requires Mn(2+) as cofactor. Expressed in roots, leaves, stems, inflorescences, flowers and throughout the shoot meristem.

It is found in the nucleus. It carries out the reaction O-phospho-L-seryl-[protein] + H2O = L-seryl-[protein] + phosphate. The enzyme catalyses O-phospho-L-threonyl-[protein] + H2O = L-threonyl-[protein] + phosphate. Insensitive to okadaic acid. Functionally, involved in the regulation of pedicel length and of CLAVATA pathways controlling stem cell identity at shoot and flower meristems. The protein is Protein phosphatase 2C 32 (POL) of Arabidopsis thaliana (Mouse-ear cress).